Consider the following 1787-residue polypeptide: Chitin synthase 5 (1787 aa).

Residues 1-26 (MASRRMSMYSVTSEGMGGPRGAGQQS) are disordered. Asn-164 carries N-linked (GlcNAc...) asparagine glycosylation. The disordered stretch occupies residues 345–367 (RIRDGDESSDGGRGARTPNSAED). N-linked (GlcNAc...) asparagine glycosylation is found at Asn-643, Asn-657, Asn-668, and Asn-695. 2 helical membrane-spanning segments follow: residues 747-767 (MWVA…LRYV) and 783-803 (FVLC…IIFL). N-linked (GlcNAc...) asparagine glycans are attached at residues Asn-894 and Asn-1018. The helical transmembrane segment at 1055–1075 (FLLAFAIIMCAVILLKFVSAL) threads the bilayer. Asn-1420 carries an N-linked (GlcNAc...) asparagine glycan. The next 3 membrane-spanning stretches (helical) occupy residues 1445–1465 (FVVF…VYLG), 1478–1498 (FPLI…LIFI), and 1506–1526 (IGWM…LPIY). An N-linked (GlcNAc...) asparagine glycan is attached at Asn-1533. Positions 1628–1657 (SPNSPAPYQHMSRSPTAYAGPTPYSDNPAA) are disordered. The 57-residue stretch at 1729–1785 (GPDDFQIVDAIRAVLMEVDLDTVTKKQVRALVEQRLQTELVGERRTFLDRQIDNELA) folds into the DEK-C domain.

This sequence belongs to the chitin synthase family. Class V subfamily.

The protein resides in the cell membrane. The catalysed reaction is [(1-&gt;4)-N-acetyl-beta-D-glucosaminyl](n) + UDP-N-acetyl-alpha-D-glucosamine = [(1-&gt;4)-N-acetyl-beta-D-glucosaminyl](n+1) + UDP + H(+). Polymerizes chitin, a structural polymer of the cell wall and septum, by transferring the sugar moiety of UDP-GlcNAc to the non-reducing end of the growing chitin polymer. May play a minor overlapping role with CHS6 in growth and differentiation. This is Chitin synthase 5 from Pyricularia oryzae (strain 70-15 / ATCC MYA-4617 / FGSC 8958) (Rice blast fungus).